Here is a 316-residue protein sequence, read N- to C-terminus: Phosducin-like protein 1 (316 aa).

The tract at residues 1 to 61 (MEQNILNSIL…EDGDKEYEVD (61 aa)) is disordered. A compositionally biased stretch (basic and acidic residues) spans 12–41 (KFGDGDQERSDIRHNDSGDENDNHSDHEGN). Positions 49–61 (EGNEDGDKEYEVD) are enriched in acidic residues. Residues 95–290 (SDYAEHREKQ…LLSSYDIIPN (196 aa)) enclose the Phosducin domain. Positions 102–156 (EKQKQKYLQKKYETQKMLEKMCFTTRDQPPPTEEENQLDSDDDDLERIRKARMEQ) form a coiled coil. The tract at residues 175-316 (FGYFKQIDSS…RPESDDDNDD (142 aa)) is thioredoxin fold. Residues 293-316 (KAKNSNWETSLSRKRPESDDDNDD) are disordered.

The protein belongs to the phosducin family.

It is found in the cytoplasm. Functionally, required for normal chemotaxis in response to cAMP and folate. Required for the heterodimerization of the G protein beta and gamma subunits gpbA and gpgA, which is itself thought to be necessary for prenylation of the gamma subunit gpgA and its association with plasma membranes. The protein is Phosducin-like protein 1 (phlp1) of Dictyostelium discoideum (Social amoeba).